The chain runs to 362 residues: Inactive 2'-5' oligoadenylate synthetase 1C (362 aa).

Belongs to the 2-5A synthase family. Expressed at highest level in brain with lesser amounts in spleen, kidney, stomach, liver, intestine, ovary, skin and testis. Not detected in lung, thymus, heart and uterus.

Functionally, does not have 2'-5'-OAS activity, but can bind double-stranded RNA. The sequence is that of Inactive 2'-5' oligoadenylate synthetase 1C from Mus musculus (Mouse).